The following is a 346-amino-acid chain: LRP2-binding protein (346 aa).

A TPR repeat occupies 58-91 (AMAYFLRGQLYFEEGWYEEALAQFEEIQEKDHQA). Sel1-like repeat units follow at residues 92 to 124 (IYQL…DSSC), 132 to 167 (FAAA…DNGN), 172 to 205 (VKAQ…GNGN), 206 to 241 (LESQ…ERGN), 242 to 276 (VYAQ…EVHD), and 296 to 331 (AMAS…RLNP).

In terms of assembly, interacts with LRP2.

The protein resides in the cytoplasm. Functionally, may act as an adapter that regulates LRP2 function. In Rattus norvegicus (Rat), this protein is LRP2-binding protein (Lrp2bp).